We begin with the raw amino-acid sequence, 530 residues long: Estrogen receptor beta (530 aa).

The interval Met1–Phe148 is modulating. Ser61 is subject to Phosphoserine; alternate. Ser61 is a glycosylation site (O-linked (GlcNAc) serine; alternate). Phosphoserine; by MAPK occurs at positions 87 and 105. 2 NR C4-type zinc fingers span residues Cys149–Cys169 and Cys185–Cys209. The nuclear receptor DNA-binding region spans Cys149 to Met214. The region spanning Ser264–His498 is the NR LBD domain. Over residues Ser506 to Thr515 the composition is skewed to polar residues. Residues Ser506–Gln530 form a disordered region.

The protein belongs to the nuclear hormone receptor family. NR3 subfamily. In terms of assembly, binds DNA as a homodimer. Can form a heterodimer with ESR1. Interacts with NCOA1, NCOA3, NCOA5 and NCOA6 coactivators, leading to a strong increase of transcription of target genes. Interacts with UBE1C and AKAP13. Interacts with DNTTIP2. Interacts with CCDC62 in the presence of estradiol/E2; this interaction seems to enhance the transcription of target genes. Interacts with DNAAF4. Interacts with PRMT2. Interacts with CCAR2 (via N-terminus) in a ligand-independent manner. Interacts with RBM39, in the presence of estradiol (E2). Interacts with STUB1/CHIP. Post-translationally, phosphorylation at Ser-87 and Ser-105 recruits NCOA1. In terms of tissue distribution, expressed in prostate, ovary, Leydig cells and in epithelium of the efferent ductules and of the initial segment of the epididymis.

The protein localises to the nucleus. Nuclear hormone receptor. Binds estrogens with an affinity similar to that of ESR1/ER-alpha, and activates expression of reporter genes containing estrogen response elements (ERE) in an estrogen-dependent manner. This Mus musculus (Mouse) protein is Estrogen receptor beta (Esr2).